Consider the following 1818-residue polypeptide: Protein encore (1818 aa).

Disordered stretches follow at residues 47–68 (ANSSGVGSGSGPGPGSGAGVSG), 123–282 (SAAG…NSSN), and 317–413 (AERH…GFIS). Residues 52–66 (VGSGSGPGPGSGAGV) are compositionally biased toward gly residues. The segment covering 124–137 (AAGSSNLGRQNSFG) has biased composition (polar residues). The segment covering 141 to 152 (GNMKGKHLTRSH) has biased composition (basic residues). Low complexity-rich tracts occupy residues 156–179 (ESTSPPRTPTPRAASEQQQQQLQG), 186–199 (NNNNINSSSKAQSA), 217–233 (QQPQQQQQQQQQQQQSV), and 266–282 (NSNGSGMEFNNNNNSSN). 2 positions are modified to phosphoserine: Ser267 and Ser270. Basic and acidic residues predominate over residues 317-328 (AERHDRHERHEM). Ser336 is subject to Phosphoserine. A compositionally biased stretch (basic and acidic residues) spans 338-348 (NHDEEPYHYEP). Composition is skewed to low complexity over residues 372-381 (NLGGSSSGSI) and 391-410 (NCNNMSNNGQSNNSSNNTSG). The 65-residue stretch at 444–508 (RNILLKIEKD…QCVIVAVAKN (65 aa)) folds into the R3H domain. In terms of domain architecture, SUZ spans 510 to 576 (RIPEIRFQSL…ARSRIFSRTG (67 aa)). Ser535 carries the post-translational modification Phosphoserine. A compositionally biased stretch (basic and acidic residues) spans 557–568 (FEEREEDYDRAR). Disordered stretches follow at residues 557-806 (FEER…SYEQ), 885-916 (QEQEQEPMAGPSSSGSATSSVGITELPSSQTP), 936-959 (PYSQCEVKTPSQNHAPSAAVEEPK), 1176-1249 (GQAP…YNPS), 1332-1648 (AAAG…LVSH), and 1684-1709 (GAGASGAAGSNGGHQPGGGGGARSHI). The span at 592–606 (YGGWEQQQQQQKQSQ) shows a compositional bias: low complexity. Positions 644–655 (NYGGPPSSGGPG) are enriched in gly residues. Residues 678 to 695 (QDSTGSTPWRLSPSSSGS) show a composition bias toward polar residues. Residues 713 to 771 (SGNQYQSQNQGNSSSGGYNNYRKSSPHQQQQSQQQQQSQQHHQQQLQQPQQLHQQSSQQ) are compositionally biased toward low complexity. Over residues 772-784 (YATTELSCSSTES) the composition is skewed to polar residues. Over residues 893–904 (AGPSSSGSATSS) the composition is skewed to low complexity. Residues 1176–1197 (GQAPMQQQAPHTGAGTTTGPPT) show a composition bias toward low complexity. Residues 1220 to 1231 (SSNGSVVTSSAY) are compositionally biased toward polar residues. A compositionally biased stretch (low complexity) spans 1381 to 1392 (ASQSAPSTPAAP). Polar residues predominate over residues 1430 to 1443 (TPHYYQGQNSNEGY). A compositionally biased stretch (low complexity) spans 1503–1521 (ASPSSVSLGGASSSGGANS). 2 stretches are compositionally biased toward polar residues: residues 1554–1565 (AANSSPGVSSYE) and 1579–1596 (FRSQKSMNQDYRRSVSQR). Low complexity predominate over residues 1608-1633 (SHESSNNSPNSIVGSQSNSAANTPNA). Residues 1684-1705 (GAGASGAAGSNGGHQPGGGGGA) show a composition bias toward gly residues.

Interacts with hfp; however, given the nuclear localization of hfp, the relevance of such interaction is unclear. Interacts with CycE, Cul1, and the SCF-proteasome complex. Expressed in all germline cells of the germarium including the stem cells and dividing cystocytes.

It is found in the cytoplasm. In terms of biological role, required for the regulation of germline mitosis, karyosome formation, and establishment of dorsoventral (DS) polarity of the egg and embryo. Involved in proper grk mRNA localization and translation in the oocyte. May control germline mitosis by facilitating the cyclin E (CycE) proteolysis by the SCF-ubiquitin-proteasome complex. The polypeptide is Protein encore (enc) (Drosophila melanogaster (Fruit fly)).